Consider the following 332-residue polypeptide: Monoterpene synthase 25 (332 aa).

Mg(2+) contacts are provided by D115, E180, N240, S244, and E248. Residues 115–121 carry the DDXXXXD motif motif; the sequence is DDPVVFD. The NSE/DTE motif signature appears at 240–248; sequence NDILSFYKE.

Belongs to the trichodiene synthase family. Mg(2+) serves as cofactor.

Its function is as follows. Terpene cyclase that catalyzes the cyclization of geranyl diphosphate (GPP) to myrcene and linalool. This is Monoterpene synthase 25 from Postia placenta (strain ATCC 44394 / Madison 698-R) (Brown rot fungus).